Reading from the N-terminus, the 153-residue chain is MAKFLSQDAIQKFKECFSLYDKKGKGKIPAGDLLTVMRCLGTCPTPGEVTRHLQVHKIGKDGEVDFSTFLTIMYRQQKQEDPENEIMVAMLMSDKQKKGVIPLKELRAKLTQMGEKLTPEEVDDLLKGVKVGPDGMVKYEEFVRQITLPVPDY.

4 consecutive EF-hand domains span residues aspartate 8 to cysteine 43, proline 44 to glutamine 79, aspartate 81 to lysine 116, and leucine 117 to aspartate 152.

It belongs to the calmodulin family. In terms of assembly, associates with the IMAC/intermicrovillar adhesion complex.

It is found in the cell projection. Its subcellular location is the microvillus. Its function is as follows. As part of the intermicrovillar adhesion complex/IMAC plays a role in epithelial brush border differentiation, controlling microvilli organization and length. Acts as a light chain for MYO7B and is required for efficient targeting of the IMAC to the tips of border brush microvilli. In Xenopus tropicalis (Western clawed frog), this protein is Calmodulin-like protein 4 (calml4).